A 142-amino-acid polypeptide reads, in one-letter code: Large ribosomal subunit protein uL13 (142 aa).

Belongs to the universal ribosomal protein uL13 family. In terms of assembly, part of the 50S ribosomal subunit.

Functionally, this protein is one of the early assembly proteins of the 50S ribosomal subunit, although it is not seen to bind rRNA by itself. It is important during the early stages of 50S assembly. This is Large ribosomal subunit protein uL13 from Dechloromonas aromatica (strain RCB).